Consider the following 460-residue polypeptide: Proline--tRNA ligase (460 aa).

This sequence belongs to the class-II aminoacyl-tRNA synthetase family. ProS type 3 subfamily. In terms of assembly, homodimer.

It localises to the cytoplasm. The enzyme catalyses tRNA(Pro) + L-proline + ATP = L-prolyl-tRNA(Pro) + AMP + diphosphate. Its function is as follows. Catalyzes the attachment of proline to tRNA(Pro) in a two-step reaction: proline is first activated by ATP to form Pro-AMP and then transferred to the acceptor end of tRNA(Pro). The protein is Proline--tRNA ligase of Methanococcus maripaludis (strain C7 / ATCC BAA-1331).